A 289-amino-acid chain; its full sequence is MGIAPVSETENDEAAQRLQSWIALGYNADMAWMANPKRQNIRELLPSARSVIAVGLNYYTPHQRSGDPAHGKISRYAWGRDYHRVLTKKLKALNLWLEQQVPDLQSRYYVDTGPIQEKAWAERAGLGWVGKNGNLISRDYGSWLFLGEIVTNITLQGDRPHSQHCGTCTRCLEACPTQAIVEPFVVDSNKCIAYHTIENRAEILPTAIADNLQGWVAGCDICQDVCPWNQRFAQPTDVADFDPYEGNLNPELETLANITEADWQQQFTASALRRIKPAMLRRNAQANLQ.

The active-site Proton donor is aspartate 111. Residues 156-185 (QGDRPHSQHCGTCTRCLEACPTQAIVEPFV) enclose the 4Fe-4S ferredoxin-type domain. Cysteine 165, cysteine 168, cysteine 171, cysteine 175, cysteine 191, cysteine 219, cysteine 222, and cysteine 226 together coordinate [4Fe-4S] cluster.

The protein belongs to the QueG family. Monomer. The cofactor is cob(II)alamin. It depends on [4Fe-4S] cluster as a cofactor.

It localises to the cytoplasm. It catalyses the reaction epoxyqueuosine(34) in tRNA + AH2 = queuosine(34) in tRNA + A + H2O. Its pathway is tRNA modification; tRNA-queuosine biosynthesis. Its function is as follows. Catalyzes the conversion of epoxyqueuosine (oQ) to queuosine (Q), which is a hypermodified base found in the wobble positions of tRNA(Asp), tRNA(Asn), tRNA(His) and tRNA(Tyr). The protein is Epoxyqueuosine reductase of Synechocystis sp. (strain ATCC 27184 / PCC 6803 / Kazusa).